A 222-amino-acid polypeptide reads, in one-letter code: Eukaryotic translation initiation factor 3 subunit K (222 aa).

A PCI domain is found at 46-208 (YDLEANLAVL…KIKTKNITEK (163 aa)).

The protein belongs to the eIF-3 subunit K family. Component of the eukaryotic translation initiation factor 3 (eIF-3) complex. The eIF-3 complex interacts with pix.

Its subcellular location is the cytoplasm. Functionally, component of the eukaryotic translation initiation factor 3 (eIF-3) complex, which is involved in protein synthesis of a specialized repertoire of mRNAs and, together with other initiation factors, stimulates binding of mRNA and methionyl-tRNAi to the 40S ribosome. The eIF-3 complex specifically targets and initiates translation of a subset of mRNAs involved in cell proliferation. In Drosophila virilis (Fruit fly), this protein is Eukaryotic translation initiation factor 3 subunit K.